We begin with the raw amino-acid sequence, 333 residues long: GTPase Obg (333 aa).

The region spanning 4 to 162 is the Obg domain; it reads GNFVDYVKIY…MDVILELKVL (159 aa). One can recognise an OBG-type G domain in the interval 163–332; that stretch reads ADVGLVGFPN…LKDKLWKMLN (170 aa). Residues 169 to 176, 194 to 198, 216 to 219, 283 to 286, and 313 to 315 each bind GTP; these read GFPNAGKS, FTTLK, DIPG, SKCD, and SSV. Residues serine 176 and threonine 196 each coordinate Mg(2+).

Belongs to the TRAFAC class OBG-HflX-like GTPase superfamily. OBG GTPase family. As to quaternary structure, monomer. Requires Mg(2+) as cofactor.

It is found in the cytoplasm. In terms of biological role, an essential GTPase which binds GTP, GDP and possibly (p)ppGpp with moderate affinity, with high nucleotide exchange rates and a fairly low GTP hydrolysis rate. Plays a role in control of the cell cycle, stress response, ribosome biogenesis and in those bacteria that undergo differentiation, in morphogenesis control. In Flavobacterium johnsoniae (strain ATCC 17061 / DSM 2064 / JCM 8514 / BCRC 14874 / CCUG 350202 / NBRC 14942 / NCIMB 11054 / UW101) (Cytophaga johnsonae), this protein is GTPase Obg.